A 603-amino-acid chain; its full sequence is ADP-ribosylation factor-binding protein GGA2 (603 aa).

The tract at residues 1 to 22 is disordered; that stretch reads MAATAVAAGTGSPAGTESAEGG. Positions 13 to 22 are enriched in low complexity; the sequence is PAGTESAEGG. A VHS domain is found at 36 to 166; the sequence is ATDPSMAEQD…MLKKQGIIKQ (131 aa). One can recognise a GAT domain in the interval 190 to 317; that stretch reads DEEKSKLLTR…GVRLYKQVVE (128 aa). Positions 318-473 are unstructured hinge; sequence GRVSAGNAVP…VFVPLESVKP (156 aa). In terms of domain architecture, GAE spans 474–595; that stretch reads SSLPPIVVYD…SEVGEVKDFP (122 aa).

It belongs to the GGA protein family. In terms of assembly, monomer. Interacts with NECAP1, TSG101, UBC and AFTPH/aftiphilin. Interacts with CNST. Interacts with GGA1 and GGA3. Binds to clathrin and activated ARFs, such as ARF1, ARF5 and ARF6. Binds RABEP1 and RABGEF1. Interacts with the type-I membrane proteins LRP3, M6PR/CD-MPR, IGF2R/CI-MPR and BACE1. Interacts (via N-terminal VHS domain) with SORL1/sorLA and SORT1 (via C-terminal cytosolic domain). Binds the accessory proteins CCDC91, P200, SYNRG, EPN4 and NECAP2. Interacts with ADRA2B. Interacts (via VHS domain) with PIK4B; the interaction is important for PIK4B location at the Golgi apparatus membrane. In terms of processing, ubiquitinated.

The protein localises to the golgi apparatus. It localises to the trans-Golgi network membrane. The protein resides in the endosome membrane. Its subcellular location is the early endosome membrane. In terms of biological role, plays a role in protein sorting and trafficking between the trans-Golgi network (TGN) and endosomes. Mediates the ARF-dependent recruitment of clathrin to the TGN and binds ubiquitinated proteins and membrane cargo molecules with a cytosolic acidic cluster-dileucine (DXXLL) motif. Mediates export of the GPCR receptor ADRA2B to the cell surface. Regulates retrograde transport of phosphorylated form of BACE1 from endosomes to the trans-Golgi network. This Mus musculus (Mouse) protein is ADP-ribosylation factor-binding protein GGA2 (Gga2).